A 1207-amino-acid chain; its full sequence is RNA-binding protein 20 (1207 aa).

The interval 1–58 (MVLAAAMSQDADPSGPEQPDRDACIVPGVQGPPAPQGQQGMQPLPPPLPPPPQPQSSL) is disordered. The span at 43–54 (PLPPPLPPPPQP) shows a compositional bias: pro residues. A U1-type zinc finger spans residues 412-446 (HLPHICSICDKKVFDLKDWELHVKGKLHAQKCLLF). The region spanning 521–596 (RVVHICNLPE…EKLLIRMSTR (76 aa)) is the RRM domain. Over residues 625-637 (LREADRYGPERPR) the composition is skewed to basic and acidic residues. Disordered stretches follow at residues 625–686 (LREA…NGED), 722–896 (EKYL…MEEL), and 951–1110 (QGET…AELK). Positions 631–650 (YGPERPRSRSPMSRSLSPRS) are RS. 5 positions are modified to phosphoserine: Ser-638, Ser-640, Ser-643, Ser-645, and Ser-652. Residues 639–650 (RSPMSRSLSPRS) show a composition bias toward low complexity. Positions 668–686 (YAWRDEDRETVPRRENGED) are enriched in basic and acidic residues. Ser-729 carries the post-translational modification Phosphoserine. 3 stretches are compositionally biased toward basic and acidic residues: residues 740–759 (KGRE…DKHP), 772–789 (RKEE…PEDS), and 796–836 (EPKV…RGAE). Ser-789 bears the Phosphoserine mark. A compositionally biased stretch (acidic residues) spans 839–848 (AGTEEQEGME). Residues Ser-853 and Ser-864 each carry the phosphoserine modification. Positions 853 to 863 (SVGTQQEGTES) are enriched in polar residues. Over residues 867–876 (ENTRTKKGQD) the composition is skewed to basic and acidic residues. A phosphoserine mark is found at Ser-879, Ser-881, and Ser-963. Over residues 970 to 979 (VPSTSTSCPN) the composition is skewed to polar residues. Ser-999 is subject to Phosphoserine. The span at 1011 to 1022 (YEKEARGAEGSD) shows a compositional bias: basic and acidic residues. Phosphoserine occurs at positions 1034, 1046, 1057, 1066, 1078, 1096, and 1101. Basic and acidic residues predominate over residues 1050–1072 (DDCKARGSPEDGPHEVSPLEEKA). Over residues 1073–1102 (SPTTESDLQSQACQENSRYTETRSLNSRSP) the composition is skewed to polar residues. Residues 1141-1172 (FYCKLCGLFYTSEEAAKVSHCRSTVHYRNLQK) form a Matrin-type zinc finger. The disordered stretch occupies residues 1181–1207 (GLKETEGVDSPSPERSGIGPHLERKKL). Phosphoserine occurs at positions 1190 and 1192.

Associates with components of the U1 and U2 U1 small nuclear ribonucleoprotein complexes. In terms of processing, phosphorylation regulates the subcellular localization. Phosphorylation of Ser-638 and Ser-640 in the RS (arginine/serine-rich) region promotes nuclear localization of the protein. In contrast, phosphorylation of the C-terminal disordered region promotes localization to cytoplasmic ribonucleoprotein granules.

It localises to the nucleus. It is found in the cytoplasm. The protein localises to the cytoplasmic ribonucleoprotein granule. RNA-binding protein that acts as a regulator of mRNA splicing of a subset of genes encoding key structural proteins involved in cardiac development, such as TTN (Titin), CACNA1C, CAMK2D or PDLIM5/ENH. Acts as a repressor of mRNA splicing: specifically binds the 5'UCUU-3' motif that is predominantly found within intronic sequences of pre-mRNAs, leading to the exclusion of specific exons in target transcripts. RBM20-mediated exon skipping is hormone-dependent and is essential for TTN isoform transition in both cardiac and skeletal muscles. RBM20-mediated exon skipping of TTN provides substrates for the formation of circular RNA (circRNAs) from the TTN transcripts. Together with RBM24, promotes the expression of short isoforms of PDLIM5/ENH in cardiomyocytes. This chain is RNA-binding protein 20, found in Rattus norvegicus (Rat).